We begin with the raw amino-acid sequence, 503 residues long: MSSSPVPLLRPPVPGNRGNGPRPPKLTLGIPPSPNSRPVDGNGVGPAAAAPEAPQPQRPSTRPAPPQLRLATPMGSSSDVPQEVPRLANGRPAPPPLATTGLNESTGHSRSSSFTYLDGKASGPASASSSNYSALSFAMGLRQPHGSTPDPSSAISSVYSDREGGVQMERDNSVNGLLPDLDKLSLEKGRPLDVDDLDDEGWLAASEQKKIIELGSLGEGAGGAVTRCKLKDGKTVFALKIITTDPNPDVKKQIVRELNFNKDCASEHICRYYGAFMDKSTGTISIAMEFCEGGSLDSIYKEVKKLGGRTGEKVLGKIAEGVLNGLTYLHSRKIIHRDIKPSNILLCRNGQVKLCDFGVSGEFGTKGDANTFIGTSYYMAPERITGQSYTITSDVWSLGVTLLEVAQHRFPFPADGTEMQPRAGLIDLLTYIVRQPIPKLKDEPENRIRWSDNFKYFIECCLEKEPPRRATPWRMLEHPWMLDMKNKKVNMANFVRQVWGWQD.

Residues 1 to 130 form a disordered region; it reads MSSSPVPLLR…ASGPASASSS (130 aa). Positions 53–66 are enriched in pro residues; the sequence is APQPQRPSTRPAPP. The span at 100–115 shows a compositional bias: polar residues; it reads TGLNESTGHSRSSSFT. Positions 121–130 are enriched in low complexity; sequence ASGPASASSS. Positions 211–481 constitute a Protein kinase domain; it reads IIELGSLGEG…PWRMLEHPWM (271 aa). ATP-binding positions include 217–225 and Lys240; that span reads LGEGAGGAV. Residue Asp338 is the Proton acceptor of the active site.

The protein belongs to the protein kinase superfamily. STE Ser/Thr protein kinase family. MAP kinase kinase subfamily.

It carries out the reaction L-seryl-[protein] + ATP = O-phospho-L-seryl-[protein] + ADP + H(+). The catalysed reaction is L-threonyl-[protein] + ATP = O-phospho-L-threonyl-[protein] + ADP + H(+). In terms of biological role, mitogen-activated kinase kinase (MAPKK), part of the cell wall integrity (CWI) signaling pathway composed by three protein kinases bck1, mkk2 and mpkA and responsible for the maintaining of cell-wall integrity balance. The CWI pathway also regulates the oxidative stress response, as well as the production of some secondary metabolites including pyomelanin. The protein is Mitogen-activated protein kinase kinae mkk2 of Aspergillus fumigatus (strain CBS 144.89 / FGSC A1163 / CEA10) (Neosartorya fumigata).